The sequence spans 3799 residues: MTNEDKLRDYLNRVMGELRQSRARLSESEARDHEPIAIIGMSCRFPDGVRSPEDLWRVLVDERHCLTDFPADRGWDLDALYHPDPGHSGTSYTRKGGFLHEAAGFDPEFFGISPREALAMDPQQRLLLETSWEVWERAGLDPAAMRGSRTGVFIGSNDLDYATRLRSVPDGVEGYLATGNLASVLSGRLSYTFGLEGPAVTVDTACSSSLVAMHLAAKALRSDECSLAMVGGVSVMAAPGTFLEFSRQRGLAQDGLCKAFADAADGTGMAEGVGVLLLERLSDARRNGHEVLAVLRGSAVNQDGASNGLTAPNGPSQEQVIRQALDNARLTPDSVDVVEAHGTGTRLGDPIEAEALLATYGQDRPEERPLWLGSVKSNIGHTQAAAGVAGVIKMVMALRQETLPATLHVDRPSTQVDWSSGAVSLLTEARPWARNGRPRRAGVSSFGVSGTNAHAILEEAPAATGNPTEADTDQEPAASASPDRTTTLPAVPWPLSGHTPEALRAQARRLHDTLTTVADGEPQPSPLDLGWSLATTRSTHRHRAVVVGADLPHLLQGVDALASGTPAPHLVRGVAGDTRTAFVFPGQGSQWAGMARELADSSPVFAERLRACEEALAPHVDWSLREVLDGSDLEKADVVQPVLWAVMVSLAALWESHGVRPDAVVGHSQGEIAAACVADALSLEDGARVVALRSRALGVLAGRGGMASLALSAEETTARLAAYKDRLSIAAVNGPHSTVVSGDVEPLHELVAACEADGVRARIVPVDYASHSAHVEEIHDTLLELLAPVTPRPSRVPFFSTVTGEWIDTTVMDAAYWYRNLRRTVQFDVATRTLIAEGFGLLIEASPHPVLAIGMQESVEAAAANCAVLGTLRRGEGGLDRYLLSLGEAHAHGADVDWPAVFAGTGAERVELPTYAFQRRRFWLDGGRDGAGGVASAGLASAGHPLFGAVVEVAGGDRTLLSGRLSVLSHPWLADHSVRGVVLVPGAAFVELALCAGERVGCGAVEELTLQAPLVLPVEGAVQVQFAVEAPDERGHRAFTVYGRSDEAAEPDAWQEYASGVLELEARPEPEGLAQWPPADAEVVPVEGLYDLLGGLGYEYGPAFQGLRRVWRRGEELFAEVSLAEELDGQADQFGIHPALLDGALQTSAVALLQHGGEAAEVRLPFAWRGVSLFATGASAARVRLSPAGQDAVSVLVADQDGVPVARVEGLVSRPVAEEQLGAGGGVGRDSLFGVEWVPFAGGDSDALAADVLEVHRFDGLVQDPQGVREAIERALGLIQGWLARERPRGSRLVVVTRGAVGGEVSDLAGAAVWGLVRSAQSEHPGQFVLVDTDGDALAGLPADEPHVMVREGQVLVPRLARVVPATEGGAGGVVWDPEKSLLVTGASGVLAGLVVRHAVAEWAVRHVVLVSRSGADGLAQELAEAGVSVQQARCDVADREAVAAVLAGIPAEHRLGGVIHTAGVLDDGVIESLTPERLEPVLRPKVDGAWWLHELTADVDLSVFAVFSSAAGVFGAAGQGNYAAANAFLDALALYRHREGLPATSLSWGLWAERSGLTGRLAESDLGRLSRQGVLPLSSEQGVALLDAVLATGRPWLVPARLDLGILRTSDQPVPPLLRGLVRRITRRAVTAGANGADSFVQRIAGLSPAEAERAVLELVCGEAAAVLGYASAGAVAPGQAFRELGFDSLTAVELRNRLNGATGLRLPATLIFDYPTPTALATHIRSSAAGTTTGPTAPVAIAGTAVDEAIAIVGMACRYPGGVASPEDLWRLVADEADAVSRFPQDRGWDLDALFDPERPGGTSLTREGGFLYDADQFDAAFFGISPREALAMDPQQRLLLETSWEALERAGIDPATLRGSATGVFAGVMYHDYGTRVLHVPEEVEGYLGNGNAGSIASGRVAYTFGLEGPAVTVDTACSSSLVTLHLASQALRQGECSLALAGGVTVLATPGVFTEFTRQRGLAEDGRCKAFAAAADGTGWGEGVGMLLLERLSDAERNGHPILAVVRGSAVNQDGASNGLTAPNGPSQQRVIRQALANARLTPADIDLVEAHGTGTRLGDPIEAQALLATYGQDRPEGEPAWLGSVKSNIGHTQAAAGVAGVIKSVMAIRNGVLPASLHVDEPTPEVDWDAGAVELLTEARPWPTTDRPRRAAVSSFGASGTNAHVILEQAADTGPVHAHEGDTTPPSVIAWPISGRDEQALREQAARLGAFVGADASLSAADVGNSLARTRASFEHRAVVVGRDRDELLAGVQALAAGEAAANVVTGRAPAEGAGRVAFVFPGQGSQWIGMGLELAEQSPVFAAALEECGQALAEHVDWDGRSLHEVLRQAEGAPSLERVDVVQPALWAVMVALAAAWRSYGIEPDAVVGHSQGEIAAACVAGVLSVEDGARVVAVRSRAITALAGRGQMVSVPLPEADTVELIRPWADDGQIAVAAVNGPASTVISGDSQAVDALLEKLDAQEIRARRIPVDYASHSPQVALIHDELLRVLDGLTPRAGTVPLFSTVTGQWLGATPMDADYWYRNLRETVRFEAGTRALAAEGWGVFVEASPHPVLTLGIQETLEALDHRGVVTGSLRRQEGGQDRLFVSLAKVHTHGGGPLDRPAFHTGTGAPRVDLPTYAFQRRRYWLEAPAGVPGDLSAAGLQTLEHPLLTGVVDLADEQRTVFTGRLSPATHPWLADHAVFGSVLLPGTGFVELALAAGEHVGHGHLDELTLHAPLFLPEEGAVHLQLVLDGPDTSGRRAVTIHSRAEDEAGGQEWTRHAGGTLAVDADHDTPPALTSWPPADADPVDLTEVYDRFAAAGYAYGPAFQGLRRVWRRDGELFAEVELAGPERDAARRFGVHPALLDAALHPLLLGHGAPQTESEGQGRLPFSWTGVSLRATGATTVRVRLTTDDADTVAVTVTDTAGTPVASVDALVTRPVTAAQFAAGRPSGQSGLFEVEWAPVPTPAAGTASWAVLGGGEVGGVGLGSYDDLAALRRAVDSGAPVPEVVLTFCGGRSETAVVPGTHTATREALALLHEWLADERFAGARLAVVTSGAVAAGPDDEVTDLAAAAVWGLVRSAQSEHPGRFVLLDVDGRAVAGAAVPTALATGEPQVAVRGGELLVPRLARAAKAREVGRDAAGVVWDPEKSLLVTGASGVLAGLTVRHAVSVWGVRHVVLLSRGGADALAQELSEVGVSVRQARCDVADREAVAAVLADIPAAHPLGGVIHTAGVLDDGVIESLTPERLEPVLRPKVDGAWWLHELTAGLDLSVFALFASGAGVFGAAGQGNYAAANAFLDALALHRSRKGLPATALSWGLWAERSGLTGQLTDAELNRMTHHGVLPLSSEQGLALLDSALATDRPWFVPVRIDLGAVRRTGFDHPLLRGLVRVPSRRTVAALDNGTPATDPASLWGRLVALSPAEQEAALLDLVGAQAAAVLGHTDPEQVTTDRPFLDLGFDSLTGVELRNRLTAATGLRLPTTLVFKHRTPAALAAQLRTDLVAVHTDGSGTDTAAPVEAARVPTNGGGTAEAFGELFVEAYRQGRSEEFFRLLRLASEFRPTFDAVRARESVPEPVRLAEGPAEGPDGPMLVCFPSVVGPSGPHQYARFAGPLRDRREVWAVAPPGFVQGELLPKDLATYTDATADAVARRVGETPFVLVGYSSGGWLAHAVASRMEEQGAAPAGVVLLDTYLPEGVVGQLGPELVGGLLERREKFRFDFGDDVWLTAMGGYFRLFDHWRPAAIKAPSLLVRSSEPMPGVPSDTDWRSRWDLPHTAVDVPGNHYTLMEDHAAETARAVRDWVGSLS.

The region spanning 33–459 (HEPIAIIGMS…GTNAHAILEE (427 aa)) is the Ketosynthase family 3 (KS3) 1 domain. Module stretches follow at residues 33–1730 (HEPI…RSSA) and 1749–3494 (DEAI…RTDL). Active-site for beta-ketoacyl synthase 1 activity residues include Cys206, His341, and His381. The segment at 462–496 (AATGNPTEADTDQEPAASASPDRTTTLPAVPWPLS) is disordered. The region spanning 582 to 895 (FVFPGQGSQW…LGEAHAHGAD (314 aa)) is the Malonyl-CoA:ACP transacylase (MAT) 1 domain. The interval 944–1069 (HPLFGAVVEV…GVLELEARPE (126 aa)) is N-terminal hotdog fold 1. Residues 944 to 1222 (HPLFGAVVEV…SRPVAEEQLG (279 aa)) enclose the PKS/mFAS DH 1 domain. His976 functions as the Proton acceptor; for dehydratase activity 1 in the catalytic mechanism. Positions 1081–1222 (AEVVPVEGLY…SRPVAEEQLG (142 aa)) are C-terminal hotdog fold 1. Asp1142 (proton donor; for dehydratase activity 1) is an active-site residue. The 173-residue stretch at 1382 to 1554 (LLVTGASGVL…TSLSWGLWAE (173 aa)) folds into the Ketoreductase (KR) 1 domain. Positions 1652–1730 (EAERAVLELV…ALATHIRSSA (79 aa)) constitute a Carrier 1 domain. Ser1690 is subject to O-(pantetheine 4'-phosphoryl)serine. The region spanning 1749–2174 (DEAIAIVGMA…GTNAHVILEQ (426 aa)) is the Ketosynthase family 3 (KS3) 2 domain. Active-site for beta-ketoacyl synthase 2 activity residues include Cys1921, His2056, and His2096. The 321-residue stretch at 2284-2604 (FVFPGQGSQW…VSLAKVHTHG (321 aa)) folds into the Malonyl-CoA:ACP transacylase (MAT) 2 domain. The interval 2656 to 2781 (HPLLTGVVDL…GTLAVDADHD (126 aa)) is N-terminal hotdog fold 2. In terms of domain architecture, PKS/mFAS DH 2 spans 2656–2936 (HPLLTGVVDL…TRPVTAAQFA (281 aa)). The active-site Proton acceptor; for dehydratase activity 2 is His2688. Positions 2794-2936 (ADPVDLTEVY…TRPVTAAQFA (143 aa)) are C-terminal hotdog fold 2. The active-site Proton donor; for dehydratase activity 2 is Asp2855. The Ketoreductase (KR) 2 domain occupies 3142-3314 (LLVTGASGVL…TALSWGLWAE (173 aa)). In terms of domain architecture, Carrier 2 spans 3419–3494 (AALLDLVGAQ…ALAAQLRTDL (76 aa)). Ser3454 bears the O-(pantetheine 4'-phosphoryl)serine mark.

Pantetheine 4'-phosphate serves as cofactor.

The protein operates within antibiotic biosynthesis. Functionally, fifth protein in the synthesis of the 16-membered macrolide antibiotics FD-891 and FD-892. Composed of 2 modules. Modifies the product of GfsD by multiple rounds of addition of methylmalonyl-CoA and other modifications to help generate the final products. This Streptomyces halstedii protein is Polyketide synthase GfsE.